A 629-amino-acid chain; its full sequence is Phosphomethylpyrimidine synthase (629 aa).

A compositionally biased stretch (polar residues) spans 1–13 (MTTKSKNAINLSD). The disordered stretch occupies residues 1–22 (MTTKSKNAINLSDSAKVDEQSV). Substrate-binding positions include N233, M262, Y291, H327, 347–349 (SRG), 388–391 (DGLR), and E427. Position 431 (H431) interacts with Zn(2+). Y454 is a substrate binding site. Residue H495 coordinates Zn(2+). Residues C575, C578, and C583 each contribute to the [4Fe-4S] cluster site.

It belongs to the ThiC family. As to quaternary structure, homodimer. [4Fe-4S] cluster serves as cofactor.

The enzyme catalyses 5-amino-1-(5-phospho-beta-D-ribosyl)imidazole + S-adenosyl-L-methionine = 4-amino-2-methyl-5-(phosphooxymethyl)pyrimidine + CO + 5'-deoxyadenosine + formate + L-methionine + 3 H(+). It functions in the pathway cofactor biosynthesis; thiamine diphosphate biosynthesis. Catalyzes the synthesis of the hydroxymethylpyrimidine phosphate (HMP-P) moiety of thiamine from aminoimidazole ribotide (AIR) in a radical S-adenosyl-L-methionine (SAM)-dependent reaction. The protein is Phosphomethylpyrimidine synthase of Pseudomonas fluorescens (strain Pf0-1).